An 85-amino-acid chain; its full sequence is Large ribosomal subunit protein bL27 (85 aa).

The disordered stretch occupies residues Met1–Arg20.

This sequence belongs to the bacterial ribosomal protein bL27 family.

The sequence is that of Large ribosomal subunit protein bL27 from Klebsiella pneumoniae (strain 342).